The sequence spans 385 residues: MRGLSRRVQAMKPSATVAVNAKALELRRQGVDLVALTAGEPDFDTPEHVKEAARRALAQGKTKYAPPAGIPELREALAEKFRRENGLSVTPEETIVTVGGKQALFNLFQAILDPGDEVIVLSPYWVSYPEMVRFAGGVVVEVETLPEEGFVPDPERVRRAITPRTKALVVNSPNNPTGAVYPKEVLEALARLAVEHDFYLVSDEIYEHLLYEGEHFSPGRVAPEHTLTVNGAAKAFAMTGWRIGYACGPKEVIKAMASVSSQSTTSPDTIAQWATLEALTNQEASRAFVEMAREAYRRRRDLLLEGLTALGLKAVRPSGAFYVLMDTSPIAPDEVRAAERLLEAGVAVVPGTDFAAFGHVRLSYATSEENLRKALERFARVLGRA.

L-aspartate contacts are provided by Gly-39, Trp-125, and Asn-175. The residue at position 234 (Lys-234) is an N6-(pyridoxal phosphate)lysine. Arg-361 contributes to the L-aspartate binding site.

Belongs to the class-I pyridoxal-phosphate-dependent aminotransferase family. In terms of assembly, homodimer. Pyridoxal 5'-phosphate is required as a cofactor.

Its subcellular location is the cytoplasm. It carries out the reaction L-aspartate + 2-oxoglutarate = oxaloacetate + L-glutamate. The enzyme catalyses L-arogenate + oxaloacetate = prephenate + L-aspartate. Its function is as follows. Catalyzes the reversible conversion of aspartate and 2-oxoglutarate to glutamate and oxaloacetate. Can also transaminate prephenate in the presence of aspartate. This Thermus thermophilus (strain ATCC 27634 / DSM 579 / HB8) protein is Aspartate/prephenate aminotransferase (aspC).